Consider the following 132-residue polypeptide: Small ribosomal subunit protein uS8 (132 aa).

Belongs to the universal ribosomal protein uS8 family. As to quaternary structure, part of the 30S ribosomal subunit. Contacts proteins S5 and S12.

Functionally, one of the primary rRNA binding proteins, it binds directly to 16S rRNA central domain where it helps coordinate assembly of the platform of the 30S subunit. In Maricaulis maris (strain MCS10) (Caulobacter maris), this protein is Small ribosomal subunit protein uS8.